Here is a 536-residue protein sequence, read N- to C-terminus: GPI alpha-1,2-mannosyltransferase 3 (536 aa).

The N-linked (GlcNAc...) asparagine glycan is linked to N15. A run of 2 helical transmembrane segments spans residues 40 to 60 (IFGI…CVLV) and 118 to 138 (VYLL…YADV). N176 carries an N-linked (GlcNAc...) asparagine glycan. 6 helical membrane passes run 206–226 (LVSL…PLIF), 243–263 (YFPI…FFYG), 297–317 (GLPV…LLST), 322–342 (ILLL…HKEF), 344–364 (FIYP…AKLQ), and 369–389 (AAAG…GLVH). Residue N467 is glycosylated (N-linked (GlcNAc...) asparagine).

Belongs to the glycosyltransferase 22 family. PIGB subfamily.

The protein resides in the endoplasmic reticulum membrane. The protein operates within glycolipid biosynthesis; glycosylphosphatidylinositol-anchor biosynthesis. Its function is as follows. Alpha-1,2-mannosyltransferase that catalyzes the transfer of the third mannose, via an alpha-1,2 bond, from a dolichol-phosphate-mannose (Dol-P-Man) to an alpha-D-Man-(1-&gt;6)-2-PEtn-alpha-D-Man-(1-&gt;4)-alpha-D-GlcN-(1-&gt;6)-(1-radyl,2-acyl-sn-glycero-3-phospho)-2-acyl-inositol intermediate to generate an alpha-D-Man-(1-&gt;2)-alpha-D-Man-(1-&gt;6)-2-PEtn-alpha-D-Man-(1-&gt;4)-alpha-D-GlcN-(1-&gt;6)-(1-radyl,2-acyl-sn-glycero-3-phospho)-2-acyl-inositol (also termed H6) and participates in the nineth step of the glycosylphosphatidylinositol-anchor biosynthesis. May also add the third mannose to an alpha-D-Man-(1-&gt;6)-alpha-D-Man-(1-&gt;4)-alpha-D-GlcN-(1-&gt;6)-(1-radyl,2-acyl-sn-glycero-3-phospho)-2-acyl-inositol (also termed H3) intermediate generating an alpha-D-Man-(1-&gt;2)-alpha-D-Man-(1-&gt;6)-alpha-D-Man-(1-&gt;4)-alpha-D-GlcN-(1-&gt;6)-(1-radyl,2-acyl-sn-glycero-3-phospho)-2-acyl-inositol (also termed H4). In Danio rerio (Zebrafish), this protein is GPI alpha-1,2-mannosyltransferase 3.